The following is a 392-amino-acid chain: Homoserine O-acetyltransferase (392 aa).

The AB hydrolase-1 domain maps to 52 to 356 (NVVVVLHALT…ICGHDGFLVE (305 aa)). The active-site Nucleophile is the Ser-157. Arg-227 contributes to the substrate binding site. Active-site residues include Asp-320 and His-350. Asp-351 is a substrate binding site. Residues 373-392 (SQSAGPGGAGPGSRKGTTRR) are disordered.

Belongs to the AB hydrolase superfamily. MetX family. Homodimer.

The protein resides in the cytoplasm. It carries out the reaction L-homoserine + acetyl-CoA = O-acetyl-L-homoserine + CoA. It participates in amino-acid biosynthesis; L-methionine biosynthesis via de novo pathway; O-acetyl-L-homoserine from L-homoserine: step 1/1. Its function is as follows. Transfers an acetyl group from acetyl-CoA to L-homoserine, forming acetyl-L-homoserine. This Mycobacterium avium (strain 104) protein is Homoserine O-acetyltransferase.